The primary structure comprises 1450 residues: Protein clueless (1450 aa).

2 disordered regions span residues 1 to 126 (MALE…PGSE) and 266 to 287 (KTRPDSVDCTPPEYVTPGVSEP). The span at 29 to 60 (NNSSAGKKQQQQQQPNQNQNLVNGNGNAADGP) shows a compositional bias: low complexity. The span at 62–71 (AKKKGKKNRN) shows a compositional bias: basic residues. At Ser-271 the chain carries Phosphoserine. The Clu domain maps to 425-667 (RAEDAFSSKL…RTFPPDVNFL (243 aa)). 2 stretches are compositionally biased toward basic and acidic residues: residues 725-734 (KQSEKTEEKA) and 743-765 (KESSETKEAEAEKPVEKKEEEKQ). 2 disordered regions span residues 725–775 (KQSE…TKTA) and 959–1011 (PAVS…SDWT). Positions 968-983 (KKRSNGNKHNKHKSKG) are enriched in basic residues. A compositionally biased stretch (low complexity) spans 984–1008 (NKQQASGNQNGSSAGSSSGGSSSSS). TPR repeat units lie at residues 1102-1135 (AYNFYTTGQAKIQQGMFKEGYELISEALNLLNNV), 1228-1261 (ALIDSNISLILHALGEYELSLRFIEHALKLNIKY), and 1263-1296 (GSKAMHVAFSYHLMARTQSCMGDFRSALNNEKET). Positions 1410 to 1450 (NNNGDTEAETKDATKDNKDLAGASTQLTNGDKDAETAVASS) are disordered. Over residues 1417–1428 (AETKDATKDNKD) the composition is skewed to basic and acidic residues.

It belongs to the CLU family.

The protein localises to the cytoplasm. Functionally, mRNA-binding protein involved in proper cytoplasmic distribution of mitochondria. This Drosophila ananassae (Fruit fly) protein is Protein clueless.